We begin with the raw amino-acid sequence, 283 residues long: Shikimate dehydrogenase (NADP(+)) (283 aa).

Shikimate contacts are provided by residues 19–21 and Thr-66; that span reads SLS. Catalysis depends on Lys-70, which acts as the Proton acceptor. Shikimate is bound by residues Asn-91 and Asp-106. NADP(+) is bound by residues 129–133, 153–158, and Leu-224; these read GAGGA and NRTPEK. Tyr-226 is a binding site for shikimate. Gly-247 provides a ligand contact to NADP(+).

This sequence belongs to the shikimate dehydrogenase family. As to quaternary structure, homodimer.

It carries out the reaction shikimate + NADP(+) = 3-dehydroshikimate + NADPH + H(+). Its pathway is metabolic intermediate biosynthesis; chorismate biosynthesis; chorismate from D-erythrose 4-phosphate and phosphoenolpyruvate: step 4/7. Functionally, involved in the biosynthesis of the chorismate, which leads to the biosynthesis of aromatic amino acids. Catalyzes the reversible NADPH linked reduction of 3-dehydroshikimate (DHSA) to yield shikimate (SA). The polypeptide is Shikimate dehydrogenase (NADP(+)) (Methanothermobacter thermautotrophicus (strain ATCC 29096 / DSM 1053 / JCM 10044 / NBRC 100330 / Delta H) (Methanobacterium thermoautotrophicum)).